Reading from the N-terminus, the 259-residue chain is Dysbindin domain-containing protein 2 (259 aa).

Disordered regions lie at residues 27–56 (SCER…PVSR) and 174–259 (ADVF…GACS). Residues 32–46 (SPPPPLPHFRLPPLP) are compositionally biased toward pro residues. The segment covering 205–223 (TSDRTTSRTSSSSSSDSST) has biased composition (low complexity). 2 positions are modified to phosphoserine: serine 217 and serine 218. Threonine 237 bears the Phosphothreonine mark. Phosphoserine is present on serine 242.

The protein belongs to the dysbindin family. As to quaternary structure, monomer. Interacts with CSNK1D and CSNK1E. Detected in brain.

Its function is as follows. May modulate the activity of casein kinase-1. Inhibits CSNK1D autophosphorylation (in vitro). The polypeptide is Dysbindin domain-containing protein 2 (DBNDD2) (Homo sapiens (Human)).